An 86-amino-acid polypeptide reads, in one-letter code: Secreted transmembrane peptide 6 (86 aa).

An N-terminal signal peptide occupies residues Met-1–Ser-31. The short motif at Ile-45 to Pro-58 is the SCOOP motif element. The short motif at Ser-51–Ser-53 is the SxS motif essential for MIK2 binding element.

It belongs to the serine rich endogenous peptide (SCOOP) phytocytokine family. Interacts with MIK2 (via extracellular leucine-rich repeat domain); this interaction triggers the formation of complex between MIK2 and the BAK1/SERK3 and SERK4 coreceptors, and subsequent BAK1 activation by phosphorylation. In terms of tissue distribution, mostly expressed in leaves, and, to a lower extent, in roots, stems, siliques, seeds and flowers.

The protein localises to the cell membrane. It localises to the secreted. It is found in the extracellular space. The protein resides in the apoplast. In terms of biological role, brassicaceae-specific phytocytokine (plant endogenous peptide released into the apoplast) perceived by MIK2 in a BAK1/SERK3 and SERK4 coreceptors-dependent manner, that modulates various physiological and antimicrobial processes including growth prevention and reactive oxygen species (ROS) response regulation. Prevents general growth and development. This is Secreted transmembrane peptide 6 from Arabidopsis thaliana (Mouse-ear cress).